A 438-amino-acid polypeptide reads, in one-letter code: Glutaryl-CoA dehydrogenase, mitochondrial (438 aa).

A mitochondrion-targeting transit peptide spans 1 to 44 (MALRGVSVQLLSRVPGLRVFRTWVSSAAQTEKVGRTQSQLAKSS). Residues 138–139 (RS) and serine 186 each bind substrate. FAD is bound by residues 177–186 (FGLTEPNSGS), serine 186, and 212–214 (WIT). The residue at position 240 (lysine 240) is an N6-acetyllysine. 287-294 (FGCLNNGR) is a substrate binding site. FAD contacts are provided by residues arginine 319, glutamine 330, and 387 to 391 (DMLGG). Glutamate 414 serves as the catalytic Proton acceptor. Glycine 415 provides a ligand contact to substrate. Residues threonine 416, 416–418 (THD), and phenylalanine 434 contribute to the FAD site.

This sequence belongs to the acyl-CoA dehydrogenase family. Homotetramer. The cofactor is FAD.

The protein localises to the mitochondrion matrix. The catalysed reaction is glutaryl-CoA + oxidized [electron-transfer flavoprotein] + 2 H(+) = (2E)-butenoyl-CoA + reduced [electron-transfer flavoprotein] + CO2. The protein operates within amino-acid metabolism; lysine degradation. It participates in amino-acid metabolism; tryptophan metabolism. Functionally, catalyzes the oxidative decarboxylation of glutaryl-CoA to crotonyl-CoA and CO(2) in the degradative pathway of L-lysine, L-hydroxylysine, and L-tryptophan metabolism. It uses electron transfer flavoprotein as its electron acceptor. This is Glutaryl-CoA dehydrogenase, mitochondrial (GCDH) from Macaca fascicularis (Crab-eating macaque).